The primary structure comprises 99 residues: Large ribosomal subunit protein uL23 (99 aa).

It belongs to the universal ribosomal protein uL23 family. As to quaternary structure, part of the 50S ribosomal subunit. Contacts protein L29, and trigger factor when it is bound to the ribosome.

Functionally, one of the early assembly proteins it binds 23S rRNA. One of the proteins that surrounds the polypeptide exit tunnel on the outside of the ribosome. Forms the main docking site for trigger factor binding to the ribosome. This Rhodopseudomonas palustris (strain BisB5) protein is Large ribosomal subunit protein uL23.